Consider the following 640-residue polypeptide: Threonine--tRNA ligase (640 aa).

Positions 1-59 (MKIKVKLPDGKEKEYDRGITPAEIAKELGIKKAIGAVVNGELWDLKRPIENDCELRLVT) constitute a TGS domain. The segment at 240 to 531 (DHRKLGPQLE…LIEHFAGAFP (292 aa)) is catalytic. Zn(2+) is bound by residues cysteine 332, histidine 383, and histidine 508.

It belongs to the class-II aminoacyl-tRNA synthetase family. As to quaternary structure, homodimer. Zn(2+) serves as cofactor.

Its subcellular location is the cytoplasm. It catalyses the reaction tRNA(Thr) + L-threonine + ATP = L-threonyl-tRNA(Thr) + AMP + diphosphate + H(+). In terms of biological role, catalyzes the attachment of threonine to tRNA(Thr) in a two-step reaction: L-threonine is first activated by ATP to form Thr-AMP and then transferred to the acceptor end of tRNA(Thr). Also edits incorrectly charged L-seryl-tRNA(Thr). This chain is Threonine--tRNA ligase, found in Thermotoga maritima (strain ATCC 43589 / DSM 3109 / JCM 10099 / NBRC 100826 / MSB8).